We begin with the raw amino-acid sequence, 182 residues long: Homeobox expressed in ES cells 1-A (182 aa).

The homeobox DNA-binding region spans 103–163 (YRGRRPRTAF…QNRRAKLKRS (61 aa)).

It belongs to the ANF homeobox family. Initially expressed in the anterior dorsal region of early embryos and later exclusively in the primordium of the anterior pituitary gland.

The protein resides in the nucleus. Appears to be involved in the regional specification of the anterior head of Xenopus embryos. This is Homeobox expressed in ES cells 1-A (hesx1-a) from Xenopus laevis (African clawed frog).